The following is a 1148-amino-acid chain: Putative transcription factor SEF1 (1148 aa).

The tract at residues 1–51 is disordered; the sequence is MVKDNRDSDQDQDFSSAHMKRQPEQQQLQQHQFPSKKQRISHHDDSHQINH. Residue Ser8 is modified to Phosphoserine. The zn(2)-C6 fungal-type DNA-binding region spans 57-87; sequence CTHCRQHKIKCDASQNFPHPCSRCEKIGLHC. The disordered stretch occupies residues 148-180; the sequence is PTPGTIIPNPDSSPSSGSPTSSAAQRDSKVSVQ. Residues 150-169 show a composition bias toward low complexity; the sequence is PGTIIPNPDSSPSSGSPTSS. Residue Ser263 is modified to Phosphoserine. Residues 524 to 550 form a disordered region; the sequence is EESEEDNNDSIDNNNNDKRNKKDEPHV. Positions 538–550 are enriched in basic and acidic residues; the sequence is NNDKRNKKDEPHV. At Ser806 the chain carries Phosphoserine. Positions 1029 to 1050 are enriched in polar residues; that stretch reads RSQSSMSHSRTPIASKSNNMTD. The interval 1029-1063 is disordered; the sequence is RSQSSMSHSRTPIASKSNNMTDLHSVVSDPGSSKS.

Its subcellular location is the nucleus. Putative transcription factor that seems to be involved in the sporulation process. Suppresses the lethal phenotype of RPM2 deletion. The sequence is that of Putative transcription factor SEF1 (SEF1) from Saccharomyces cerevisiae (strain ATCC 204508 / S288c) (Baker's yeast).